Reading from the N-terminus, the 76-residue chain is U-actitoxin-Avd8c (76 aa).

An N-terminal signal peptide occupies residues 1–16 (LVIVFVVLLGVPLISA). Residues 17–33 (NEEELLAILQDQRNDAR) constitute a propeptide that is removed on maturation.

It belongs to the sea anemone 8 toxin family.

The protein resides in the secreted. It localises to the nematocyst. The chain is U-actitoxin-Avd8c from Anemonia viridis (Snakelocks anemone).